Reading from the N-terminus, the 102-residue chain is Small ribosomal subunit protein uS10 (102 aa).

Belongs to the universal ribosomal protein uS10 family. As to quaternary structure, part of the 30S ribosomal subunit.

Involved in the binding of tRNA to the ribosomes. This Cereibacter sphaeroides (strain ATCC 17029 / ATH 2.4.9) (Rhodobacter sphaeroides) protein is Small ribosomal subunit protein uS10.